A 110-amino-acid polypeptide reads, in one-letter code: Large ribosomal subunit protein uL22 (110 aa).

This sequence belongs to the universal ribosomal protein uL22 family. As to quaternary structure, part of the 50S ribosomal subunit.

This protein binds specifically to 23S rRNA; its binding is stimulated by other ribosomal proteins, e.g. L4, L17, and L20. It is important during the early stages of 50S assembly. It makes multiple contacts with different domains of the 23S rRNA in the assembled 50S subunit and ribosome. In terms of biological role, the globular domain of the protein is located near the polypeptide exit tunnel on the outside of the subunit, while an extended beta-hairpin is found that lines the wall of the exit tunnel in the center of the 70S ribosome. The protein is Large ribosomal subunit protein uL22 of Shewanella frigidimarina (strain NCIMB 400).